The chain runs to 429 residues: Adenylosuccinate synthetase (429 aa).

GTP-binding positions include 12–18 (GDEGKGK) and 40–42 (GHT). D13 acts as the Proton acceptor in catalysis. Mg(2+) contacts are provided by D13 and G40. IMP is bound by residues 13-16 (DEGK), 38-41 (NAGH), T128, R142, Q223, T238, and R302. H41 serves as the catalytic Proton donor. 298 to 304 (VNTGRPR) contributes to the substrate binding site. GTP-binding positions include R304, 330-332 (KLD), and 412-414 (GVG).

Belongs to the adenylosuccinate synthetase family. Homodimer. Mg(2+) is required as a cofactor.

The protein resides in the cytoplasm. The catalysed reaction is IMP + L-aspartate + GTP = N(6)-(1,2-dicarboxyethyl)-AMP + GDP + phosphate + 2 H(+). Its pathway is purine metabolism; AMP biosynthesis via de novo pathway; AMP from IMP: step 1/2. Its function is as follows. Plays an important role in the de novo pathway of purine nucleotide biosynthesis. Catalyzes the first committed step in the biosynthesis of AMP from IMP. The protein is Adenylosuccinate synthetase of Micrococcus luteus (strain ATCC 4698 / DSM 20030 / JCM 1464 / CCM 169 / CCUG 5858 / IAM 1056 / NBRC 3333 / NCIMB 9278 / NCTC 2665 / VKM Ac-2230) (Micrococcus lysodeikticus).